A 331-amino-acid polypeptide reads, in one-letter code: Cytosolic 5'-nucleotidase 3A (331 aa).

Catalysis depends on Asp-83, which acts as the Nucleophile. Positions 83 and 85 each coordinate Mg(2+). Asp-85 functions as the Proton donor in the catalytic mechanism. A CMP-binding site is contributed by Glu-130. N(7)-methyl-GMP contacts are provided by Glu-130 and Ser-151. Residues 198 to 200 (SAG) and Lys-247 contribute to the substrate site. Asp-272 contacts Mg(2+). Ser-273 carries the post-translational modification Phosphoserine.

It belongs to the pyrimidine 5'-nucleotidase family. Monomer. Isoform 2 is highly expressed in the brain, heart, spleen, kidney and blood. Isoform 2 is expressed (at protein level) in the spleen, skeletal muscle and gastrointestinal epithelia.

The protein localises to the cytoplasm. It catalyses the reaction N(7)-methyl-GMP + H2O = N(7)-methylguanosine + phosphate. The catalysed reaction is a ribonucleoside 5'-phosphate + H2O = a ribonucleoside + phosphate. In terms of biological role, nucleotidase which shows specific activity towards cytidine monophosphate (CMP) and 7-methylguanosine monophosphate (m(7)GMP). CMP seems to be the preferred substrate. The polypeptide is Cytosolic 5'-nucleotidase 3A (Nt5c3a) (Mus musculus (Mouse)).